The sequence spans 161 residues: Transcriptional repressor NrdR (161 aa).

The segment at 3–34 is a zinc-finger region; that stretch reads CPYCGARDARVIDSRELNGGESIRRRRECIAC. The ATP-cone domain maps to 49 to 139; the sequence is LMVVKRDGRR…VYRRFADLED (91 aa).

This sequence belongs to the NrdR family. The cofactor is Zn(2+).

Its function is as follows. Negatively regulates transcription of bacterial ribonucleotide reductase nrd genes and operons by binding to NrdR-boxes. The chain is Transcriptional repressor NrdR from Thermomicrobium roseum (strain ATCC 27502 / DSM 5159 / P-2).